We begin with the raw amino-acid sequence, 360 residues long: Protein phosphatase 1 regulatory subunit 7 (360 aa).

Positions 1 to 64 (MAAERGAGQQ…GEEDPEEEHE (64 aa)) are disordered. N-acetylalanine is present on alanine 2. 5 positions are modified to phosphoserine: serine 12, serine 24, serine 27, serine 44, and serine 47. A compositionally biased stretch (basic and acidic residues) spans 17–34 (EVDRRVESEESGDEEGKK). Over residues 53–63 (ERGEEDPEEEH) the composition is skewed to acidic residues. LRR repeat units follow at residues 77 to 98 (DAED…EVLK), 99 to 120 (KVKT…EELQ), 121 to 142 (SLRE…EALT), 143 to 164 (ELEI…DKVT), 165 to 186 (QLKK…SNLH), 187 to 208 (QLQM…DTLT), 209 to 230 (NLES…DALT), 231 to 252 (NLTV…QNLV), 253 to 274 (NLQE…ENNN), 275 to 296 (KLTM…SHLT), and 297 to 318 (EPQE…DELK). Serine 322 carries the post-translational modification Phosphoserine. In terms of domain architecture, LRRCT spans 331-360 (NPLQKDPQYRRKVMLALPSVRQIDATFVRF).

The protein belongs to the SDS22 family. In terms of assembly, interacts with PPP1CA, PPP1CB and PPP1CC/PPP1G.

The protein resides in the nucleus. Its function is as follows. Regulatory subunit of protein phosphatase 1. The chain is Protein phosphatase 1 regulatory subunit 7 (PPP1R7) from Pongo abelii (Sumatran orangutan).